Reading from the N-terminus, the 252-residue chain is Probable phosphatase Shewmr4_2619 (252 aa).

The Zn(2+) site is built by histidine 8, histidine 10, histidine 16, histidine 41, glutamate 74, histidine 102, histidine 132, aspartate 193, and histidine 195.

This sequence belongs to the PHP family. It depends on Zn(2+) as a cofactor.

The polypeptide is Probable phosphatase Shewmr4_2619 (Shewanella sp. (strain MR-4)).